Here is a 212-residue protein sequence, read N- to C-terminus: Transmembrane emp24 domain-containing protein p24delta7 (212 aa).

Residues 1–22 (MNHRRSSIVLLILSILSPVTLS) form the signal peptide. Over 23–179 (IRYELLSGHT…HNLNIATNSK (157 aa)) the chain is Lumenal. A GOLD domain is found at 32 to 147 (TKCISEEIHA…VETMEFEVKK (116 aa)). Residues 162–175 (LRDREEEMHNLNIA) are a coiled coil. Arg165 carries the omega-N-methylated arginine modification. The helical transmembrane segment at 180–200 (MAWLSFVSLAVCLSVAGLQFW) threads the bilayer. At 201–212 (HLKTFFQKKKLI) the chain is on the cytoplasmic side. The short motif at 205–206 (FF) is the COPII vesicle coat-binding element. The COPI vesicle coat-binding motif lies at 205–212 (FFQKKKLI).

It belongs to the EMP24/GP25L family. As to quaternary structure, probably oligomerizes with other members of the EMP24/GP25L family. Associates with the COPI vesicle coat (coatomer). Associates with the COPII vesicle coat (coatomer).

Its subcellular location is the endoplasmic reticulum membrane. The protein resides in the golgi apparatus. It localises to the cis-Golgi network membrane. It is found in the golgi stack membrane. Functionally, involved in vesicular protein trafficking. Mainly functions in the early secretory pathway. Thought to act as cargo receptor at the lumenal side for incorporation of secretory cargo molecules into transport vesicles and to be involved in vesicle coat formation at the cytoplasmic side. The chain is Transmembrane emp24 domain-containing protein p24delta7 from Arabidopsis thaliana (Mouse-ear cress).